The sequence spans 433 residues: MLDIQLLRKDLDGVAKRLADRGYTLDVAAFSALEAERRAIQTRTEELQARRNTLSKQIGAMKAKGEDTSAVMAEVGGIGDEMKASAAKLDEIQARLSELLLGMPNLAHESVPVGKDEADNVEVRRWGTPRQFDFDVKDHVDIGTPLGLDFETGAKLAGARFTMLRGPIARLHRALAQFMLDTHTQQHGYSETYTPYIVNPEILYGTGQLPKFADDMFRVEKGGAENTVTQYLISTSEISLTNTVRESIVEASALPIKLTAHSPCFRSEAGSYGRDTRGMIRQHQFDKVEMVQIVAPESSYAALDEMVGHAEAILQKLGLPYRVVALCTGDMGFSAAKTFDLEVWLPAQNTYREISSCSNTEAFQARRMQARFRNAQGKPELVHTLNGSGLAVGRTLVAVLENYQNADGSVTVPEVLRPYMGGLERIDAPAQAS.

An L-serine-binding site is contributed by 235 to 237; the sequence is TSE. 266 to 268 is an ATP binding site; sequence RSE. Residue Glu-289 coordinates L-serine. 353-356 serves as a coordination point for ATP; sequence EISS. Ser-388 is an L-serine binding site.

Belongs to the class-II aminoacyl-tRNA synthetase family. Type-1 seryl-tRNA synthetase subfamily. Homodimer. The tRNA molecule binds across the dimer.

The protein localises to the cytoplasm. The catalysed reaction is tRNA(Ser) + L-serine + ATP = L-seryl-tRNA(Ser) + AMP + diphosphate + H(+). The enzyme catalyses tRNA(Sec) + L-serine + ATP = L-seryl-tRNA(Sec) + AMP + diphosphate + H(+). The protein operates within aminoacyl-tRNA biosynthesis; selenocysteinyl-tRNA(Sec) biosynthesis; L-seryl-tRNA(Sec) from L-serine and tRNA(Sec): step 1/1. Its function is as follows. Catalyzes the attachment of serine to tRNA(Ser). Is also able to aminoacylate tRNA(Sec) with serine, to form the misacylated tRNA L-seryl-tRNA(Sec), which will be further converted into selenocysteinyl-tRNA(Sec). The sequence is that of Serine--tRNA ligase from Burkholderia cepacia (Pseudomonas cepacia).